An 884-amino-acid polypeptide reads, in one-letter code: Protein P (884 aa).

The terminal protein domain (TP) stretch occupies residues 1–184; that stretch reads MHPFSRLFRN…GKPYSWEHRQ (184 aa). Residues 185-387 are spacer; it reads LVQHNGQQHK…YCIHHIVSSL (203 aa). A disordered region spans residues 299–345; the sequence is RNSGHTTWFSSASNSNKSRSREKAYSSNSTSKRYSPPLNYEKSDFSS. The polymerase/reverse transcriptase domain (RT) stretch occupies residues 388 to 729; that stretch reads DDWGPCTVTG…YEELWPVVRQ (342 aa). A Reverse transcriptase domain is found at 398–639; the sequence is DVTIKSPRTP…NHLHFMGYVI (242 aa). 3 residues coordinate Mg(2+): Asp470, Asp590, and Asp591.

It belongs to the hepadnaviridae P protein family.

It catalyses the reaction DNA(n) + a 2'-deoxyribonucleoside 5'-triphosphate = DNA(n+1) + diphosphate. The enzyme catalyses Endonucleolytic cleavage to 5'-phosphomonoester.. Its activity is regulated as follows. Activated by host HSP70 and HSP40 in vitro to be able to bind the epsilon loop of the pgRNA. Because deletion of the RNase H region renders the protein partly chaperone-independent, the chaperones may be needed indirectly to relieve occlusion of the RNA-binding site by this domain. Inhibited by several reverse-transcriptase inhibitors: Lamivudine, Adefovir and Entecavir. Functionally, multifunctional enzyme that converts the viral RNA genome into dsDNA in viral cytoplasmic capsids. This enzyme displays a DNA polymerase activity that can copy either DNA or RNA templates, and a ribonuclease H (RNase H) activity that cleaves the RNA strand of RNA-DNA heteroduplexes in a partially processive 3'- to 5'-endonucleasic mode. Neo-synthesized pregenomic RNA (pgRNA) are encapsidated together with the P protein, and reverse-transcribed inside the nucleocapsid. Initiation of reverse-transcription occurs first by binding the epsilon loop on the pgRNA genome, and is initiated by protein priming, thereby the 5'-end of (-)DNA is covalently linked to P protein. Partial (+)DNA is synthesized from the (-)DNA template and generates the relaxed circular DNA (RC-DNA) genome. After budding and infection, the RC-DNA migrates in the nucleus, and is converted into a plasmid-like covalently closed circular DNA (cccDNA). The activity of P protein does not seem to be necessary for cccDNA generation, and is presumably released from (+)DNA by host nuclear DNA repair machinery. In Woodchuck hepatitis B virus (isolate 7) (WHV), this protein is Protein P.